The primary structure comprises 199 residues: Recombination protein RecR (199 aa).

The segment at 57-72 (CAECRTFTEEEVCHIC) adopts a C4-type zinc-finger fold. Residues 81-176 (GQICVVESPA…EASRIAHGVP (96 aa)) enclose the Toprim domain.

This sequence belongs to the RecR family.

May play a role in DNA repair. It seems to be involved in an RecBC-independent recombinational process of DNA repair. It may act with RecF and RecO. This chain is Recombination protein RecR, found in Vibrio parahaemolyticus serotype O3:K6 (strain RIMD 2210633).